The sequence spans 437 residues: Lipid II isoglutaminyl synthase (glutamine-hydrolyzing) subunit MurT (437 aa).

Cys202, Cys205, Cys224, and Cys226 together coordinate Zn(2+). Residue Asp349 is part of the active site.

The protein belongs to the MurCDEF family. MurT subfamily. Forms a heterodimer with GatD.

It catalyses the reaction beta-D-GlcNAc-(1-&gt;4)-Mur2Ac(oyl-L-Ala-gamma-D-Glu-L-Lys-D-Ala-D-Ala)-di-trans,octa-cis-undecaprenyl diphosphate + L-glutamine + ATP + H2O = beta-D-GlcNAc-(1-&gt;4)-Mur2Ac(oyl-L-Ala-D-isoglutaminyl-L-Lys-D-Ala-D-Ala)-di-trans,octa-cis-undecaprenyl diphosphate + L-glutamate + ADP + phosphate + H(+). The enzyme catalyses beta-D-GlcNAc-(1-&gt;4)-Mur2Ac(oyl-L-Ala-gamma-D-Glu-L-Lys-D-Ala-D-Ala)-di-trans,octa-cis-undecaprenyl diphosphate + ATP = beta-D-GlcNAc-(1-&gt;4)-Mur2Ac(oyl-L-Ala-gamma-D-O-P-Glu-L-Lys-D-Ala-D-Ala)-di-trans,octa-cis-undecaprenyl diphosphate + ADP. It carries out the reaction beta-D-GlcNAc-(1-&gt;4)-Mur2Ac(oyl-L-Ala-gamma-D-O-P-Glu-L-Lys-D-Ala-D-Ala)-di-trans,octa-cis-undecaprenyl diphosphate + NH4(+) = beta-D-GlcNAc-(1-&gt;4)-Mur2Ac(oyl-L-Ala-D-isoglutaminyl-L-Lys-D-Ala-D-Ala)-di-trans,octa-cis-undecaprenyl diphosphate + phosphate + H(+). It participates in cell wall biogenesis; peptidoglycan biosynthesis. Its function is as follows. The lipid II isoglutaminyl synthase complex catalyzes the formation of alpha-D-isoglutamine in the cell wall lipid II stem peptide. The MurT subunit catalyzes the ATP-dependent amidation of D-glutamate residue of lipid II, converting it to an isoglutamine residue. In Staphylococcus aureus (strain N315), this protein is Lipid II isoglutaminyl synthase (glutamine-hydrolyzing) subunit MurT.